Reading from the N-terminus, the 384-residue chain is MRSLDAFAGQKLAALDAQSLRRRLSPTRRHDGAVVERDGKRMISFSCNDYLNLSQHHLVRAAAAEAALNYGAGAAASRLVTGDHPLLSDLEKRLAHLKGTEAACVFGSGYLANTGVIPTLVGPGDVILIDALAHACIWAGAQLSGAKVVKFAHNDPADLERLLLAERGAARHALVATDGVFSMDGDIAPLDALSELCQRHDAWLLSDDAHGVGVLAEGRGSGALFPTAKIPLQMGTLSKALGSYGGYLCGSQAVVDLLKTRARTLVYATGLPPASAAAALASLDLIAANPTMTEVPLAKARLFTRRLGLPEACSPIVPVVLGSAESALAASTELQNQGFLVVAIRPPTVPDGTARLRIAFSAAHEDADIIRLADAIAKLRETAS.

Residue Arg22 coordinates substrate. A pyridoxal 5'-phosphate-binding site is contributed by Gly109 to Tyr110. His134 contributes to the substrate binding site. Pyridoxal 5'-phosphate is bound by residues Ser182, Asp207 to His210, and Thr236 to Lys239. Lys239 carries the N6-(pyridoxal phosphate)lysine modification. Thr348 is a binding site for substrate.

The protein belongs to the class-II pyridoxal-phosphate-dependent aminotransferase family. BioF subfamily. Homodimer. Pyridoxal 5'-phosphate is required as a cofactor.

The catalysed reaction is 6-carboxyhexanoyl-[ACP] + L-alanine + H(+) = (8S)-8-amino-7-oxononanoate + holo-[ACP] + CO2. Its pathway is cofactor biosynthesis; biotin biosynthesis. Its function is as follows. Catalyzes the decarboxylative condensation of pimeloyl-[acyl-carrier protein] and L-alanine to produce 8-amino-7-oxononanoate (AON), [acyl-carrier protein], and carbon dioxide. This Caulobacter vibrioides (strain ATCC 19089 / CIP 103742 / CB 15) (Caulobacter crescentus) protein is Putative 8-amino-7-oxononanoate synthase (bioF).